The chain runs to 1377 residues: DNA-directed RNA polymerase subunit beta (1377 aa).

It belongs to the RNA polymerase beta chain family. The RNAP catalytic core consists of 2 alpha, 1 beta, 1 beta' and 1 omega subunit. When a sigma factor is associated with the core the holoenzyme is formed, which can initiate transcription.

It carries out the reaction RNA(n) + a ribonucleoside 5'-triphosphate = RNA(n+1) + diphosphate. In terms of biological role, DNA-dependent RNA polymerase catalyzes the transcription of DNA into RNA using the four ribonucleoside triphosphates as substrates. The protein is DNA-directed RNA polymerase subunit beta of Campylobacter lari (strain RM2100 / D67 / ATCC BAA-1060).